Here is a 132-residue protein sequence, read N- to C-terminus: Small ribosomal subunit protein uS8 (132 aa).

It belongs to the universal ribosomal protein uS8 family. Part of the 30S ribosomal subunit. Contacts proteins S5 and S12.

In terms of biological role, one of the primary rRNA binding proteins, it binds directly to 16S rRNA central domain where it helps coordinate assembly of the platform of the 30S subunit. In Rickettsia typhi (strain ATCC VR-144 / Wilmington), this protein is Small ribosomal subunit protein uS8.